A 314-amino-acid chain; its full sequence is MNISVENPVFVHEDSTTQKTGELRLDSDIPMSKISSDDEVFLAPEMNAFGRQFRDYTDTNSERQKSVEHFYATQHTNQTLDFVQKMRSEYGKLDKMVMNIWECCELSKEVVDESDPDLDEPQIQHLLQSAEAIRKDYPNEDWLHLTALIHDLGKVLTLPQFGGLPQWAVVGDTFPVGCAFDESNVHHKYFMENPDFNNPKYNTKAGIYSEGCGLENVLMSWGHDDYMYLVAKENGSTLPSPGLFIIRYHSFYPLHKAGAYTHLMNEEDKENLKWLHVFNKYDLYSKSKVHVNVEKVKPYYMSLIKKYFPENLRW.

Residues Arg54 and 112-114 (DES) each bind substrate. Fe cation contacts are provided by His125, His150, and Asp151. Substrate contacts are provided by residues Lys154 and 171–172 (GD). Residues His223, His249, and Asp282 each coordinate Fe cation. 249–250 (HS) lines the substrate pocket.

This sequence belongs to the myo-inositol oxygenase family. Requires Fe cation as cofactor. Expressed in flowers and siliques.

It is found in the cytoplasm. It catalyses the reaction myo-inositol + O2 = D-glucuronate + H2O + H(+). It participates in polyol metabolism; myo-inositol degradation into D-glucuronate; D-glucuronate from myo-inositol: step 1/1. Its function is as follows. Involved in the biosynthesis of UDP-glucuronic acid (UDP-GlcA), providing nucleotide sugars for cell-wall polymers. May be also involved in plant ascorbate biosynthesis. In Arabidopsis thaliana (Mouse-ear cress), this protein is Inositol oxygenase 5 (MIOX5).